Here is a 135-residue protein sequence, read N- to C-terminus: Small ribosomal subunit protein bS6 (135 aa).

At K93 the chain carries N6-acetyllysine. The disordered stretch occupies residues 98–135; sequence EASPMVKAKDERRERRDDFANETADDAEAGDSEEEEEE. Over residues 104–116 the composition is skewed to basic and acidic residues; that stretch reads KAKDERRERRDDF. Over residues 120 to 135 the composition is skewed to acidic residues; it reads TADDAEAGDSEEEEEE.

This sequence belongs to the bacterial ribosomal protein bS6 family. As to quaternary structure, part of the 30S ribosomal subunit. Interacts weakly with uL2 in one of the 3.5 A resolved structures. 5 different forms of the protein, varying only in the number of C-terminal glutamate residues, were isolated. The sequence shown is form bS6-6, which is the longest. The first two Glu are encoded by the rpsF gene, the other Glu are added post-translationally by the RimK enzyme.

Its function is as follows. Binds together with bS18 to 16S ribosomal RNA. This Escherichia coli (strain K12) protein is Small ribosomal subunit protein bS6 (rpsF).